A 117-amino-acid polypeptide reads, in one-letter code: Basic phospholipase A2 pseudexin A chain (117 aa).

Cystine bridges form between Cys11–Cys71, Cys27–Cys117, Cys29–Cys45, Cys44–Cys98, Cys51–Cys91, Cys60–Cys84, and Cys78–Cys89. Ca(2+)-binding residues include Tyr28, Gly30, and Gly32. Residue His48 is part of the active site. Asp49 serves as a coordination point for Ca(2+). Asp92 is an active-site residue.

This sequence belongs to the phospholipase A2 family. Group I subfamily. D49 sub-subfamily. Ca(2+) is required as a cofactor. Expressed by the venom gland.

The protein localises to the secreted. The enzyme catalyses a 1,2-diacyl-sn-glycero-3-phosphocholine + H2O = a 1-acyl-sn-glycero-3-phosphocholine + a fatty acid + H(+). Functionally, PLA2 catalyzes the calcium-dependent hydrolysis of the 2-acyl groups in 3-sn-phosphoglycerides. In Pseudechis porphyriacus (Red-bellied black snake), this protein is Basic phospholipase A2 pseudexin A chain.